Reading from the N-terminus, the 1179-residue chain is ATP-dependent helicase/deoxyribonuclease subunit B (1179 aa).

The protein belongs to the helicase family. AddB/RexB type 2 subfamily. In terms of assembly, heterodimer of AddA and RexB. The cofactor is Mg(2+).

In terms of biological role, the heterodimer acts as both an ATP-dependent DNA helicase and an ATP-dependent, dual-direction single-stranded exonuclease. Recognizes the chi site generating a DNA molecule suitable for the initiation of homologous recombination. This subunit has 5' -&gt; 3' nuclease activity but not helicase activity. The polypeptide is ATP-dependent helicase/deoxyribonuclease subunit B (Lacticaseibacillus casei (strain BL23) (Lactobacillus casei)).